Here is a 425-residue protein sequence, read N- to C-terminus: MEMRNVKGTKDYLPEEQVLRNKIKRACEDTFERYGCKPLETPTLNMYELMSYKYGGGDEILKEIYTLQDQGKRDLALRYDLTIPFAKVVAMNPNIRLPFKRYEIGKVFRDGPIKQGRFREFIQCDVDIVGVESVMAEAELMSMAFELFQTLNLEVTIQYNNRKLLNGILQAIHIPTELTSDVILSLDKIEKIGIDGVRKDVLERGISEEMADTICNTVLSCLQLSIADFEEAFNNPLVADGVNELQQLQQYLIALGINENTIFNPFLARGLTMYTGTVYEIFLKDGSITSSIGSGGRYDNIIGAFRGDNMNYPTVGISFGLDVIYTALSQKETVSSTADVFIIPLGTELQCLQIAQQLRSTTSLKIELELAGRKLKRALNYANKENIPYVLIIGEEEICTETVMLRNMKEGSEVKVPLSSLSNYL.

It belongs to the class-II aminoacyl-tRNA synthetase family. As to quaternary structure, homodimer.

It localises to the cytoplasm. The enzyme catalyses tRNA(His) + L-histidine + ATP = L-histidyl-tRNA(His) + AMP + diphosphate + H(+). This is Histidine--tRNA ligase 1 from Bacillus thuringiensis subsp. konkukian (strain 97-27).